The primary structure comprises 562 residues: Arginine--tRNA ligase (562 aa).

The 'HIGH' region signature appears at 129–139; it reads ANPTGPLHVGH.

This sequence belongs to the class-I aminoacyl-tRNA synthetase family. In terms of assembly, monomer.

It is found in the cytoplasm. It carries out the reaction tRNA(Arg) + L-arginine + ATP = L-arginyl-tRNA(Arg) + AMP + diphosphate. The polypeptide is Arginine--tRNA ligase (Xylella fastidiosa (strain M23)).